A 255-amino-acid chain; its full sequence is 5-oxoprolinase subunit A 1 (255 aa).

It belongs to the LamB/PxpA family. As to quaternary structure, forms a complex composed of PxpA, PxpB and PxpC.

It carries out the reaction 5-oxo-L-proline + ATP + 2 H2O = L-glutamate + ADP + phosphate + H(+). In terms of biological role, catalyzes the cleavage of 5-oxoproline to form L-glutamate coupled to the hydrolysis of ATP to ADP and inorganic phosphate. The sequence is that of 5-oxoprolinase subunit A 1 from Agrobacterium fabrum (strain C58 / ATCC 33970) (Agrobacterium tumefaciens (strain C58)).